The sequence spans 264 residues: Indole-3-glycerol phosphate synthase (264 aa).

The protein belongs to the TrpC family.

It carries out the reaction 1-(2-carboxyphenylamino)-1-deoxy-D-ribulose 5-phosphate + H(+) = (1S,2R)-1-C-(indol-3-yl)glycerol 3-phosphate + CO2 + H2O. The protein operates within amino-acid biosynthesis; L-tryptophan biosynthesis; L-tryptophan from chorismate: step 4/5. The sequence is that of Indole-3-glycerol phosphate synthase from Xylella fastidiosa (strain 9a5c).